A 647-amino-acid polypeptide reads, in one-letter code: UvrABC system protein C (647 aa).

The GIY-YIG domain maps to 16 to 95 (VEPGVYRFRD…IKEFDPRFNV (80 aa)). The 36-residue stretch at 208-243 (DRYARELEQQMNAAAENLDFERAARLRDDRSALKRA) folds into the UVR domain.

The protein belongs to the UvrC family. Interacts with UvrB in an incision complex.

Its subcellular location is the cytoplasm. Functionally, the UvrABC repair system catalyzes the recognition and processing of DNA lesions. UvrC both incises the 5' and 3' sides of the lesion. The N-terminal half is responsible for the 3' incision and the C-terminal half is responsible for the 5' incision. The sequence is that of UvrABC system protein C from Mycobacterium marinum (strain ATCC BAA-535 / M).